The chain runs to 160 residues: Transcription elongation factor GreA (160 aa).

Residues 2 to 30 (SEKTYPMTLAEKEQLEQELEELKLVRRPE) are a coiled coil.

Belongs to the GreA/GreB family.

Its function is as follows. Necessary for efficient RNA polymerase transcription elongation past template-encoded arresting sites. The arresting sites in DNA have the property of trapping a certain fraction of elongating RNA polymerases that pass through, resulting in locked ternary complexes. Cleavage of the nascent transcript by cleavage factors such as GreA or GreB allows the resumption of elongation from the new 3'terminus. GreA releases sequences of 2 to 3 nucleotides. This Streptococcus mutans serotype c (strain ATCC 700610 / UA159) protein is Transcription elongation factor GreA.